A 20-amino-acid polypeptide reads, in one-letter code: Fibrinogen beta chain (20 aa).

Residues 1–12 (IIDYYDEGEEDR) show a composition bias toward acidic residues. Positions 1–20 (IIDYYDEGEEDRDVGVVDAR) are disordered.

Heterohexamer; disulfide linked. Contains 2 sets of 3 non-identical chains (alpha, beta and gamma). The 2 heterotrimers are in head to head conformation with the N-termini in a small central domain. Conversion of fibrinogen to fibrin is triggered by thrombin, which cleaves fibrinopeptides A and B from alpha and beta chains, and thus exposes the N-terminal polymerization sites responsible for the formation of the soft clot.

The protein localises to the secreted. Cleaved by the protease thrombin to yield monomers which, together with fibrinogen alpha (FGA) and fibrinogen gamma (FGG), polymerize to form an insoluble fibrin matrix. Fibrin has a major function in hemostasis as one of the primary components of blood clots. In addition, functions during the early stages of wound repair to stabilize the lesion and guide cell migration during re-epithelialization. Was originally thought to be essential for platelet aggregation, based on in vitro studies using anticoagulated blood. However subsequent studies have shown that it is not absolutely required for thrombus formation in vivo. Enhances expression of SELP in activated platelets. Maternal fibrinogen is essential for successful pregnancy. Fibrin deposition is also associated with infection, where it protects against IFNG-mediated hemorrhage. May also facilitate the antibacterial immune response via both innate and T-cell mediated pathways. This chain is Fibrinogen beta chain (FGB), found in Felis catus (Cat).